A 375-amino-acid chain; its full sequence is Acetylornithine aminotransferase (375 aa).

Pyridoxal 5'-phosphate-binding positions include 102-103 (GA) and Phe129. Residue Arg132 coordinates N(2)-acetyl-L-ornithine. 214-217 (DEVQ) is a pyridoxal 5'-phosphate binding site. Lys243 is subject to N6-(pyridoxal phosphate)lysine. Ser271 contacts N(2)-acetyl-L-ornithine. A pyridoxal 5'-phosphate-binding site is contributed by Thr272.

Belongs to the class-III pyridoxal-phosphate-dependent aminotransferase family. ArgD subfamily. Homodimer. Pyridoxal 5'-phosphate serves as cofactor.

It is found in the cytoplasm. The catalysed reaction is N(2)-acetyl-L-ornithine + 2-oxoglutarate = N-acetyl-L-glutamate 5-semialdehyde + L-glutamate. The protein operates within amino-acid biosynthesis; L-arginine biosynthesis; N(2)-acetyl-L-ornithine from L-glutamate: step 4/4. The protein is Acetylornithine aminotransferase of Archaeoglobus fulgidus (strain ATCC 49558 / DSM 4304 / JCM 9628 / NBRC 100126 / VC-16).